The chain runs to 324 residues: MDSRAGNTADPRGGRRGGGLQGSRSPRARQLLERLDARPLAARAAADLTALVRKAGATLRLRHTEGVSGLDSADIEVTDSRLPHATLVKHRPQHQRSETLGTWTEPLPVTQNKASYALKVPQATGRFSVELTRGPAGFGLTLSGGRNVSGDAPLTVHGLLKDGPAQRCGRLQAGDLVLYINGQSTQGLTHAQVVERIRTGGPHLCLVLQRPQDMDGSRIKEVGGHRKTDRSLDPRGSRVESRSTISPVHHRPKTRTSPRPSPEAVAIGHVVRAVEHPTEDLENRIPGTPGPWLVPSEDRLSRALGVRGGGAQLALEMAAGRRRH.

The disordered stretch occupies residues 1-26; the sequence is MDSRAGNTADPRGGRRGGGLQGSRSP. The PDZ domain occupies 128–212; sequence SVELTRGPAG…HLCLVLQRPQ (85 aa). Residues 216 to 241 are compositionally biased toward basic and acidic residues; the sequence is GSRIKEVGGHRKTDRSLDPRGSRVES. Residues 216 to 263 are disordered; that stretch reads GSRIKEVGGHRKTDRSLDPRGSRVESRSTISPVHHRPKTRTSPRPSPE. The residue at position 261 (S261) is a Phosphoserine.

This is PDZ domain-containing protein MAGIX (Magix) from Mus musculus (Mouse).